Consider the following 372-residue polypeptide: uncharacterized protein (372 aa).

Residues 49 to 72 (FSHKGGGKGGGSGAGSNDGGCSGE) form a disordered region. Residues 55-70 (GKGGGSGAGSNDGGCS) are compositionally biased toward gly residues.

This is an uncharacterized protein from Halorubrum lacusprofundi (strain ATCC 49239 / DSM 5036 / JCM 8891 / ACAM 34).